The sequence spans 750 residues: Serine/threonine-protein kinase PknG (750 aa).

Residues 1–66 form a disordered region; sequence MAKASETERS…PQDRMATTSR (66 aa). The segment covering 17 to 34 has biased composition (polar residues); it reads ADAQTATSATVRPLSTQA. The region spanning 151-396 is the Protein kinase domain; it reads YEVKGCIAHG…EMSAQLTGVL (246 aa). Residues 157 to 165 and lysine 181 each bind ATP; that span reads IAHGGLGWI. The Proton acceptor role is filled by aspartate 276.

Belongs to the protein kinase superfamily. Ser/Thr protein kinase family. Autophosphorylated.

The catalysed reaction is L-seryl-[protein] + ATP = O-phospho-L-seryl-[protein] + ADP + H(+). It catalyses the reaction L-threonyl-[protein] + ATP = O-phospho-L-threonyl-[protein] + ADP + H(+). This is Serine/threonine-protein kinase PknG (pknG) from Mycobacterium bovis (strain ATCC BAA-935 / AF2122/97).